Here is a 455-residue protein sequence, read N- to C-terminus: Glutamyl-tRNA reductase (455 aa).

Substrate-binding positions include 49 to 52, serine 109, 114 to 116, and glutamine 120; these read TCNR and ETQ. Cysteine 50 serves as the catalytic Nucleophile. Residue 189–194 coordinates NADP(+); it reads GAGKMG.

It belongs to the glutamyl-tRNA reductase family. In terms of assembly, homodimer.

The enzyme catalyses (S)-4-amino-5-oxopentanoate + tRNA(Glu) + NADP(+) = L-glutamyl-tRNA(Glu) + NADPH + H(+). It participates in porphyrin-containing compound metabolism; protoporphyrin-IX biosynthesis; 5-aminolevulinate from L-glutamyl-tRNA(Glu): step 1/2. Functionally, catalyzes the NADPH-dependent reduction of glutamyl-tRNA(Glu) to glutamate 1-semialdehyde (GSA). The chain is Glutamyl-tRNA reductase from Bacillus pumilus (strain SAFR-032).